The sequence spans 538 residues: Chaperonin GroEL (538 aa).

ATP-binding positions include T29–P32, D86–T90, G413, D479–L481, and D495.

This sequence belongs to the chaperonin (HSP60) family. As to quaternary structure, forms a cylinder of 14 subunits composed of two heptameric rings stacked back-to-back. Interacts with the co-chaperonin GroES.

It localises to the cytoplasm. It catalyses the reaction ATP + H2O + a folded polypeptide = ADP + phosphate + an unfolded polypeptide.. Functionally, together with its co-chaperonin GroES, plays an essential role in assisting protein folding. The GroEL-GroES system forms a nano-cage that allows encapsulation of the non-native substrate proteins and provides a physical environment optimized to promote and accelerate protein folding. The sequence is that of Chaperonin GroEL from Thermotoga petrophila (strain ATCC BAA-488 / DSM 13995 / JCM 10881 / RKU-1).